The following is a 62-amino-acid chain: Photosystem II reaction center protein K (62 aa).

Positions 1–25 (MPNILSLTCICFNSVLYPTTSFFFA) are excised as a propeptide. The helical transmembrane segment at 33–53 (IFNPIVDVMPVIPLFFFLLAF) threads the bilayer.

Belongs to the PsbK family. PSII is composed of 1 copy each of membrane proteins PsbA, PsbB, PsbC, PsbD, PsbE, PsbF, PsbH, PsbI, PsbJ, PsbK, PsbL, PsbM, PsbT, PsbX, PsbY, PsbZ, Psb30/Ycf12, at least 3 peripheral proteins of the oxygen-evolving complex and a large number of cofactors. It forms dimeric complexes.

The protein resides in the plastid. It is found in the chloroplast thylakoid membrane. Its function is as follows. One of the components of the core complex of photosystem II (PSII). PSII is a light-driven water:plastoquinone oxidoreductase that uses light energy to abstract electrons from H(2)O, generating O(2) and a proton gradient subsequently used for ATP formation. It consists of a core antenna complex that captures photons, and an electron transfer chain that converts photonic excitation into a charge separation. This chain is Photosystem II reaction center protein K, found in Agrostis stolonifera (Creeping bentgrass).